The chain runs to 397 residues: Elongation factor Tu (397 aa).

Residues 10–206 form the tr-type G domain; that stretch reads KPHVNIGTIG…AVDDSIPEPQ (197 aa). Positions 19 to 26 are G1; sequence GHIDHGKT. Position 19–26 (19–26) interacts with GTP; the sequence is GHIDHGKT. Residue Thr26 coordinates Mg(2+). Positions 62–66 are G2; that stretch reads GITIS. Residues 83–86 form a G3 region; the sequence is DCPG. Residues 83 to 87 and 138 to 141 contribute to the GTP site; these read DCPGH and NKAD. Residues 138–141 form a G4 region; sequence NKAD. Residues 176-178 form a G5 region; the sequence is SAL.

This sequence belongs to the TRAFAC class translation factor GTPase superfamily. Classic translation factor GTPase family. EF-Tu/EF-1A subfamily. As to quaternary structure, monomer.

Its subcellular location is the cytoplasm. It catalyses the reaction GTP + H2O = GDP + phosphate + H(+). Functionally, GTP hydrolase that promotes the GTP-dependent binding of aminoacyl-tRNA to the A-site of ribosomes during protein biosynthesis. The protein is Elongation factor Tu of Frankia alni (strain DSM 45986 / CECT 9034 / ACN14a).